The sequence spans 202 residues: Peptidyl-tRNA hydrolase (202 aa).

Tyr-16 contacts tRNA. His-21 functions as the Proton acceptor in the catalytic mechanism. Tyr-68, Asn-70, and Asn-116 together coordinate tRNA.

Belongs to the PTH family. Monomer.

It localises to the cytoplasm. The enzyme catalyses an N-acyl-L-alpha-aminoacyl-tRNA + H2O = an N-acyl-L-amino acid + a tRNA + H(+). Hydrolyzes ribosome-free peptidyl-tRNAs (with 1 or more amino acids incorporated), which drop off the ribosome during protein synthesis, or as a result of ribosome stalling. Its function is as follows. Catalyzes the release of premature peptidyl moieties from peptidyl-tRNA molecules trapped in stalled 50S ribosomal subunits, and thus maintains levels of free tRNAs and 50S ribosomes. The protein is Peptidyl-tRNA hydrolase of Treponema pallidum (strain Nichols).